Consider the following 448-residue polypeptide: Divalent metal cation transporter MntH (448 aa).

The segment covering 1 to 10 (MKKDKTERTK) has biased composition (basic and acidic residues). The disordered stretch occupies residues 1–20 (MKKDKTERTKQSWRKAQNAP). The next 11 helical transmembrane spans lie at 41–61 (LFAFMGPGALIAVGYVDPGNW), 69–89 (SEFGYTLLSVILISNILAVLL), 117–137 (GFVLWILAELAIIATDIAEVI), 147–167 (FGIPLIWGVCITALDIFLVLF), 176–196 (IEVIVITLMVTILVCFGAEMV), 215–235 (IVTNPAMLYIALGILGATVMP), 270–290 (FSLTIALLINASILILAAAAF), 307–327 (LLNPTLGSSIASTVFAVALLA), 363–383 (VLAIVPAVIITALYGANGINE), 384–404 (LLIFSQVILSMQLSFAVIPLV), and 424–444 (IISWAVAIFIAVLNIYLLFYT).

Belongs to the NRAMP family.

It is found in the cell membrane. H(+)-stimulated, divalent metal cation uptake system. This is Divalent metal cation transporter MntH from Listeria monocytogenes serotype 4b (strain CLIP80459).